A 209-amino-acid chain; its full sequence is Uracil phosphoribosyltransferase (209 aa).

Residues Arg-79, Arg-104, and 131-139 contribute to the 5-phospho-alpha-D-ribose 1-diphosphate site; that span reads DPMLATGGS. Residues Ile-194 and 199–201 contribute to the uracil site; that span reads GDA. Residue Asp-200 coordinates 5-phospho-alpha-D-ribose 1-diphosphate.

Belongs to the UPRTase family. It depends on Mg(2+) as a cofactor.

It catalyses the reaction UMP + diphosphate = 5-phospho-alpha-D-ribose 1-diphosphate + uracil. The protein operates within pyrimidine metabolism; UMP biosynthesis via salvage pathway; UMP from uracil: step 1/1. Allosterically activated by GTP. Its function is as follows. Catalyzes the conversion of uracil and 5-phospho-alpha-D-ribose 1-diphosphate (PRPP) to UMP and diphosphate. This Shouchella clausii (strain KSM-K16) (Alkalihalobacillus clausii) protein is Uracil phosphoribosyltransferase.